A 78-amino-acid polypeptide reads, in one-letter code: MRSGVFVAVLVVVVFALLTQGQELHVPEREAVANLAARILKIVHAPHDAAAGVPHKRNSELINSLLGISALMNEAGRR.

Positions 1–21 (MRSGVFVAVLVVVVFALLTQG) are cleaved as a signal peptide. At Ala-75 the chain carries Alanine amide.

It belongs to the arthropod PDH family. Eyestalk sinus gland.

It is found in the secreted. In terms of biological role, the pigment-dispersing hormone causes the migration of the distal retinal pigment into the proximal end of the pigment chromatophore cells and thus decreases the amount of light entering the retinulas. May also function as a neurotransmitter and/or neuromodulator. The chain is Pigment-dispersing hormone 2 peptides (PDH2) from Callinectes sapidus (Blue crab).